A 572-amino-acid polypeptide reads, in one-letter code: Methionine--tRNA ligase (572 aa).

A 'HIGH' region motif is present at residues 11 to 21 (PYINGIKHLGN). 4 residues coordinate Zn(2+): Cys-143, Cys-146, Cys-156, and Cys-159. A 'KMSKS' region motif is present at residues 346–350 (QFSTS). Thr-349 contacts ATP.

The protein belongs to the class-I aminoacyl-tRNA synthetase family. MetG type 1 subfamily. As to quaternary structure, monomer. Requires Zn(2+) as cofactor.

It localises to the cytoplasm. The catalysed reaction is tRNA(Met) + L-methionine + ATP = L-methionyl-tRNA(Met) + AMP + diphosphate. Its function is as follows. Is required not only for elongation of protein synthesis but also for the initiation of all mRNA translation through initiator tRNA(fMet) aminoacylation. This is Methionine--tRNA ligase from Cereibacter sphaeroides (strain KD131 / KCTC 12085) (Rhodobacter sphaeroides).